Reading from the N-terminus, the 99-residue chain is Cyclin-dependent protein kinase inhibitor SMR7 (99 aa).

The segment at 49–70 is disordered; the sequence is ICITPTARGAKTPECPAAPRKR.

Expressed in root meristems after induction.

Probable cyclin-dependent protein kinase (CDK) inhibitor that functions as a repressor of mitosis in the endoreduplication cell cycle. Acts as a potent cell cycle inhibitor, regulating a hydroxyurea-dependent checkpoint in leaves. The chain is Cyclin-dependent protein kinase inhibitor SMR7 from Arabidopsis thaliana (Mouse-ear cress).